Here is a 461-residue protein sequence, read N- to C-terminus: Elongation factor 1-alpha (461 aa).

A N,N,N-trimethylglycine modification is found at Gly2. N6,N6-dimethyllysine; alternate is present on Lys3. Lys3 is modified (N6-methyllysine; alternate). The tr-type G domain occupies 6 to 241 (KTHINVVVIG…DSIEPPKRPT (236 aa)). A G1 region spans residues 15 to 22 (GHVDSGKS). 15-22 (GHVDSGKS) contributes to the GTP binding site. Residue Lys31 is modified to N6-methyllysine. Residues 71-75 (GITID) form a G2 region. At Lys80 the chain carries N6,N6,N6-trimethyllysine. The interval 92–95 (DAPG) is G3. GTP-binding positions include 92–96 (DAPGH) and 154–157 (NKMD). Residues 154–157 (NKMD) form a G4 region. The interval 193-195 (SGF) is G5. The residue at position 317 (Lys317) is an N6,N6-dimethyllysine; alternate. N6-methyllysine; alternate is present on Lys317. N6-methyllysine is present on Lys391.

Belongs to the TRAFAC class translation factor GTPase superfamily. Classic translation factor GTPase family. EF-Tu/EF-1A subfamily.

Its subcellular location is the cytoplasm. Functionally, this protein promotes the GTP-dependent binding of aminoacyl-tRNA to the A-site of ribosomes during protein biosynthesis. The chain is Elongation factor 1-alpha (TEF) from Pseudoechria curvicolla (Podospora curvicolla).